A 717-amino-acid polypeptide reads, in one-letter code: ATP-dependent zinc metalloprotease FtsH (717 aa).

Residues 1–9 lie on the Cytoplasmic side of the membrane; that stretch reads MKNASRIFK. A helical transmembrane segment spans residues 10–30; it reads GPLIWILLCIGLIIVFLQFAG. At 31-111 the chain is on the extracellular side; sequence SGNGYKDIPT…SWQGENPGQS (81 aa). Residues 112–132 form a helical membrane-spanning segment; it reads IWKALLINFLPFVIILLFFLW. Over 133–717 the chain is Cytoplasmic; sequence AMNAAQGMGG…NGNPWGPPRS (585 aa). 207 to 214 contacts ATP; the sequence is GPPGTGKT. Histidine 429 contacts Zn(2+). Residue glutamate 430 is part of the active site. Zn(2+)-binding residues include histidine 433 and aspartate 505. Positions 617–717 are disordered; that stretch reads AFTGSDKRVP…NGNPWGPPRS (101 aa). Residues 691–717 are compositionally biased toward pro residues; that stretch reads PEPPSPTHPGEGPQPPSNGNPWGPPRS.

This sequence in the central section; belongs to the AAA ATPase family. It in the C-terminal section; belongs to the peptidase M41 family. In terms of assembly, homohexamer. Zn(2+) is required as a cofactor.

The protein localises to the cell membrane. Functionally, acts as a processive, ATP-dependent zinc metallopeptidase for both cytoplasmic and membrane proteins. Plays a role in the quality control of integral membrane proteins. The protein is ATP-dependent zinc metalloprotease FtsH of Cutibacterium acnes (strain SK137) (Propionibacterium acnes).